Consider the following 449-residue polypeptide: MHSRQQTIFALSSGRPPAALAIVRVSGPEAAIVLERIAGRLPPPRQAMRALLHDASAQPIDDAIVLWFPAPRSATGEDVAEFHIHGGRAVLSAVIAAIGTNENLRAAEPGEFTRRAFENGKLDLTEAEGLDDLIHADTERQRRQALRQLQGLLGDRARDWRGEIIAASALVEAAIDFADEGDVPDELIAPAKAKIEILLDEIEDVLAQEGRSEKLRDGLVVAITGPPNVGKSTLMNQLARREVAIVSPHAGTTRDIIEVHLDLDGYPVTVIDTAGIREAIDPVEQEGVRRARSRAAEADLRLWLVDAQAAGDGEDALRAWMAQGQNGFWVVRNKVDVAGEPTGELSATGWPCFSISAANGRGVAELIAALGKFAAAHLGGESALITRARHRDLLRQTADALGRAIDLPEQVELIAEELRIAAHRLGQLLGRVDVEDILDVIFREFCVGK.

Residues Arg-24, Glu-81, and Lys-121 each contribute to the (6S)-5-formyl-5,6,7,8-tetrahydrofolate site. The TrmE-type G domain maps to 218-375 (GLVVAITGPP…LIAALGKFAA (158 aa)). GTP contacts are provided by residues 228 to 233 (NVGKST), 247 to 253 (SPHAGTT), and 272 to 275 (DTAG). 2 residues coordinate Mg(2+): Ser-232 and Thr-253. Lys-449 contributes to the (6S)-5-formyl-5,6,7,8-tetrahydrofolate binding site.

This sequence belongs to the TRAFAC class TrmE-Era-EngA-EngB-Septin-like GTPase superfamily. TrmE GTPase family. Homodimer. Heterotetramer of two MnmE and two MnmG subunits. The cofactor is K(+).

The protein resides in the cytoplasm. Its function is as follows. Exhibits a very high intrinsic GTPase hydrolysis rate. Involved in the addition of a carboxymethylaminomethyl (cmnm) group at the wobble position (U34) of certain tRNAs, forming tRNA-cmnm(5)s(2)U34. The polypeptide is tRNA modification GTPase MnmE (Rhodopseudomonas palustris (strain BisB18)).